A 62-amino-acid polypeptide reads, in one-letter code: Photosystem II reaction center protein Z (62 aa).

The next 2 membrane-spanning stretches (helical) occupy residues 8–28 (AVFA…VVFS) and 41–61 (FSGT…NSLI).

It belongs to the PsbZ family. PSII is composed of 1 copy each of membrane proteins PsbA, PsbB, PsbC, PsbD, PsbE, PsbF, PsbH, PsbI, PsbJ, PsbK, PsbL, PsbM, PsbT, PsbY, PsbZ, Psb30/Ycf12, at least 3 peripheral proteins of the oxygen-evolving complex and a large number of cofactors. It forms dimeric complexes.

The protein localises to the plastid. The protein resides in the chloroplast thylakoid membrane. May control the interaction of photosystem II (PSII) cores with the light-harvesting antenna, regulates electron flow through the 2 photosystem reaction centers. PSII is a light-driven water plastoquinone oxidoreductase, using light energy to abstract electrons from H(2)O, generating a proton gradient subsequently used for ATP formation. The chain is Photosystem II reaction center protein Z from Populus alba (White poplar).